A 717-amino-acid polypeptide reads, in one-letter code: DNA ligase (717 aa).

Residues 44–48, 93–94, and glutamate 127 each bind NAD(+); these read DADYD and SL. Residue lysine 129 is the N6-AMP-lysine intermediate of the active site. 4 residues coordinate NAD(+): arginine 150, glutamate 186, lysine 302, and lysine 326. Zn(2+) is bound by residues cysteine 431, cysteine 434, cysteine 455, and cysteine 461. The BRCT domain maps to 639–717; the sequence is ATDSPVAGKT…EDEWLALIGG (79 aa).

It belongs to the NAD-dependent DNA ligase family. LigA subfamily. Requires Mg(2+) as cofactor. The cofactor is Mn(2+).

It carries out the reaction NAD(+) + (deoxyribonucleotide)n-3'-hydroxyl + 5'-phospho-(deoxyribonucleotide)m = (deoxyribonucleotide)n+m + AMP + beta-nicotinamide D-nucleotide.. DNA ligase that catalyzes the formation of phosphodiester linkages between 5'-phosphoryl and 3'-hydroxyl groups in double-stranded DNA using NAD as a coenzyme and as the energy source for the reaction. It is essential for DNA replication and repair of damaged DNA. The polypeptide is DNA ligase (Sinorhizobium medicae (strain WSM419) (Ensifer medicae)).